A 53-amino-acid polypeptide reads, in one-letter code: Metallocarboxypeptidase inhibitor b (53 aa).

Disulfide bonds link cysteine 9/cysteine 23, cysteine 15/cysteine 51, and cysteine 27/cysteine 38. Alanine 53 is a binding site for Zn(2+).

Metallocarboxypeptidase inhibitor. Has an inhibitory effect on bovine CPA1 and porcine CPB1. Does not inhibit D.melanogaster svr (carboxypeptidase D). Shows no activity against serine proteases subtilisin or bovine trypsin, cysteine protease papain, and aspartyl protease porcine pepsin. This Nerita versicolor (Four-tooth nerite) protein is Metallocarboxypeptidase inhibitor b.